Reading from the N-terminus, the 164-residue chain is UPF0178 protein RPB_3201 (164 aa).

Belongs to the UPF0178 family.

The sequence is that of UPF0178 protein RPB_3201 from Rhodopseudomonas palustris (strain HaA2).